A 280-amino-acid chain; its full sequence is Small ribosomal subunit protein uS2 (280 aa).

It belongs to the universal ribosomal protein uS2 family.

This is Small ribosomal subunit protein uS2 from Desulforapulum autotrophicum (strain ATCC 43914 / DSM 3382 / VKM B-1955 / HRM2) (Desulfobacterium autotrophicum).